The primary structure comprises 190 residues: Peptide deformylase (190 aa).

Residues Cys106 and His148 each contribute to the Fe cation site. Residue Glu149 is part of the active site. His152 contributes to the Fe cation binding site.

This sequence belongs to the polypeptide deformylase family. The cofactor is Fe(2+).

It catalyses the reaction N-terminal N-formyl-L-methionyl-[peptide] + H2O = N-terminal L-methionyl-[peptide] + formate. In terms of biological role, removes the formyl group from the N-terminal Met of newly synthesized proteins. Requires at least a dipeptide for an efficient rate of reaction. N-terminal L-methionine is a prerequisite for activity but the enzyme has broad specificity at other positions. This Methylacidiphilum infernorum (isolate V4) (Methylokorus infernorum (strain V4)) protein is Peptide deformylase.